Reading from the N-terminus, the 126-residue chain is Profilin-1B (126 aa).

The tract at residues 2–36 (SWQTYVDTNLVGTGAVTQAAILGLDGNTWATSAGF) is actin binding. Residue Lys-104 is modified to N6,N6,N6-trimethyllysine.

It belongs to the profilin family. Occurs in many kinds of cells as a complex with monomeric actin in a 1:1 ratio.

It localises to the cytoplasm. It is found in the cytoskeleton. Its function is as follows. Binds to actin and affects the structure of the cytoskeleton. At high concentrations, profilin prevents the polymerization of actin, whereas it enhances it at low concentrations. By binding to PIP2, it inhibits the formation of IP3 and DG. This Acanthamoeba castellanii (Amoeba) protein is Profilin-1B.